We begin with the raw amino-acid sequence, 328 residues long: Dihydroorotate dehydrogenase (quinone), mitochondrial (328 aa).

Residues 21–38 traverse the membrane as a helical segment; the sequence is AHGLSIAGLKTGLVTGSA. FMN contacts are provided by residues 61–65 and Thr-85; that span reads AGYDK. Position 65 (Lys-65) interacts with substrate. Position 110–114 (110–114) interacts with substrate; sequence NRLGF. 2 residues coordinate FMN: Asn-139 and Asn-170. 170–175 lines the substrate pocket; it reads NISSPN. Residue Ser-173 is the Nucleophile of the active site. Residues Lys-215 and Ser-243 each contribute to the FMN site. Residue 244 to 245 coordinates substrate; the sequence is NT. Residues Gly-266 and Gly-295 each contribute to the FMN site.

Belongs to the dihydroorotate dehydrogenase family. Type 2 subfamily. The cofactor is FMN.

The protein resides in the mitochondrion inner membrane. The enzyme catalyses (S)-dihydroorotate + a quinone = orotate + a quinol. The protein operates within pyrimidine metabolism; UMP biosynthesis via de novo pathway; orotate from (S)-dihydroorotate (quinone route): step 1/1. Catalyzes the conversion of dihydroorotate to orotate with quinone as electron acceptor. The protein is Dihydroorotate dehydrogenase (quinone), mitochondrial (URA1) of Cyclocybe aegerita (Black poplar mushroom).